We begin with the raw amino-acid sequence, 219 residues long: tRNA (guanine-N(7)-)-methyltransferase (219 aa).

The S-adenosyl-L-methionine site is built by Glu46, Glu71, Asp100, and Asp122. The active site involves Asp122. Lys126 contributes to the substrate binding site. The tract at residues 128 to 133 (KHEKRR) is interaction with RNA. Residues Asp158 and 199-202 (TEYE) contribute to the substrate site.

Belongs to the class I-like SAM-binding methyltransferase superfamily. TrmB family.

The catalysed reaction is guanosine(46) in tRNA + S-adenosyl-L-methionine = N(7)-methylguanosine(46) in tRNA + S-adenosyl-L-homocysteine. It participates in tRNA modification; N(7)-methylguanine-tRNA biosynthesis. Functionally, catalyzes the formation of N(7)-methylguanine at position 46 (m7G46) in tRNA. In Oenococcus oeni (strain ATCC BAA-331 / PSU-1), this protein is tRNA (guanine-N(7)-)-methyltransferase.